Consider the following 130-residue polypeptide: DNA-directed RNA polymerase subunit omega (130 aa).

Disordered regions lie at residues 80 to 99 (PEPD…DADD) and 110 to 130 (EELL…EEDE). A compositionally biased stretch (basic and acidic residues) spans 110–124 (EELLKGLEGLAPREE).

This sequence belongs to the RNA polymerase subunit omega family. As to quaternary structure, the RNAP catalytic core consists of 2 alpha, 1 beta, 1 beta' and 1 omega subunit. When a sigma factor is associated with the core the holoenzyme is formed, which can initiate transcription.

The enzyme catalyses RNA(n) + a ribonucleoside 5'-triphosphate = RNA(n+1) + diphosphate. Its function is as follows. Promotes RNA polymerase assembly. Latches the N- and C-terminal regions of the beta' subunit thereby facilitating its interaction with the beta and alpha subunits. The sequence is that of DNA-directed RNA polymerase subunit omega from Nitrobacter hamburgensis (strain DSM 10229 / NCIMB 13809 / X14).